Here is an 82-residue protein sequence, read N- to C-terminus: Small ribosomal subunit protein uS17 (82 aa).

The protein belongs to the universal ribosomal protein uS17 family. As to quaternary structure, part of the 30S ribosomal subunit.

In terms of biological role, one of the primary rRNA binding proteins, it binds specifically to the 5'-end of 16S ribosomal RNA. This Rickettsia typhi (strain ATCC VR-144 / Wilmington) protein is Small ribosomal subunit protein uS17.